We begin with the raw amino-acid sequence, 33 residues long: Alpha-amanitin proprotein 2 (33 aa).

The propeptide occupies 1-10 (MSDINATRLP). The residue at position 11 (I11) is a (3R,4R)-4,5-dihydroxyisoleucine; in form alpha-amanitin. I11 is modified ((3R,4S)-4-hydroxyisoleucine; in form gamma-amanitin). Positions 11 to 18 (IWGIGCNP) form a cross-link, cyclopeptide (Ile-Pro). The 2'-cysteinyl-6'-hydroxytryptophan sulfoxide (Trp-Cys) cross-link spans 12-16 (WGIGC). The residue at position 18 (P18) is a 4-hydroxyproline. Positions 19 to 33 (CVGDDVTSVLTRGEA) are excised as a propeptide.

Belongs to the MSDIN fungal toxin family. Processed by the macrocyclase-peptidase enzyme POPB to yield a toxic cyclic octapeptide. POPB first removes 10 residues from the N-terminus. Conformational trapping of the remaining peptide forces the enzyme to release this intermediate rather than proceed to macrocyclization. The enzyme rebinds the remaining peptide in a different conformation and catalyzes macrocyclization of the N-terminal 8 residues. In terms of tissue distribution, expressed in basidiocarps.

In terms of biological role, major toxin belonging to the bicyclic octapeptides amatoxins that acts by binding non-competitively to RNA polymerase II and greatly slowing the elongation of transcripts from target promoters. This Amanita exitialis (Guangzhou destroying angel) protein is Alpha-amanitin proprotein 2.